We begin with the raw amino-acid sequence, 275 residues long: Glutamate racemase (275 aa).

Substrate-binding positions include 10–11 and 42–43; these read DS and YG. Cysteine 74 acts as the Proton donor/acceptor in catalysis. 75–76 is a substrate binding site; it reads NT. The Proton donor/acceptor role is filled by cysteine 189. 190 to 191 contacts substrate; it reads TH.

The protein belongs to the aspartate/glutamate racemases family.

It catalyses the reaction L-glutamate = D-glutamate. Its pathway is cell wall biogenesis; peptidoglycan biosynthesis. Its function is as follows. Provides the (R)-glutamate required for cell wall biosynthesis. The sequence is that of Glutamate racemase from Bartonella tribocorum (strain CIP 105476 / IBS 506).